A 544-amino-acid chain; its full sequence is Chaperonin GroEL (544 aa).

ATP-binding positions include 30-33 (TLGP), lysine 51, 87-91 (DGTTT), glycine 415, and aspartate 495.

It belongs to the chaperonin (HSP60) family. As to quaternary structure, forms a cylinder of 14 subunits composed of two heptameric rings stacked back-to-back. Interacts with the co-chaperonin GroES.

Its subcellular location is the cytoplasm. It catalyses the reaction ATP + H2O + a folded polypeptide = ADP + phosphate + an unfolded polypeptide.. In terms of biological role, together with its co-chaperonin GroES, plays an essential role in assisting protein folding. The GroEL-GroES system forms a nano-cage that allows encapsulation of the non-native substrate proteins and provides a physical environment optimized to promote and accelerate protein folding. This is Chaperonin GroEL from Methylobacillus flagellatus (strain ATCC 51484 / DSM 6875 / VKM B-1610 / KT).